The primary structure comprises 188 residues: Elongation factor P (188 aa).

N6-(3,6-diaminohexanoyl)-5-hydroxylysine is present on Lys34.

This sequence belongs to the elongation factor P family. Post-translationally, may be beta-lysylated on the epsilon-amino group of Lys-34 by the combined action of EpmA and EpmB, and then hydroxylated on the C5 position of the same residue by EpmC (if this protein is present). Lysylation is critical for the stimulatory effect of EF-P on peptide-bond formation. The lysylation moiety may extend toward the peptidyltransferase center and stabilize the terminal 3-CCA end of the tRNA. Hydroxylation of the C5 position on Lys-34 may allow additional potential stabilizing hydrogen-bond interactions with the P-tRNA.

Its subcellular location is the cytoplasm. The protein operates within protein biosynthesis; polypeptide chain elongation. Involved in peptide bond synthesis. Alleviates ribosome stalling that occurs when 3 or more consecutive Pro residues or the sequence PPG is present in a protein, possibly by augmenting the peptidyl transferase activity of the ribosome. Modification of Lys-34 is required for alleviation. In Stenotrophomonas maltophilia (strain R551-3), this protein is Elongation factor P.